The following is an 810-amino-acid chain: AMP deaminase (810 aa).

Polar residues predominate over residues Met-1–Asn-10. Disordered stretches follow at residues Met-1 to Ser-61 and Ala-114 to Leu-137. Ser-19, Ser-58, and Ser-61 each carry phosphoserine. The span at His-125–Leu-137 shows a compositional bias: polar residues. Phosphoserine is present on Ser-138. The Zn(2+) site is built by His-362 and His-364. Residues His-364 and Lys-433–Tyr-438 contribute to the substrate site. Residue His-630 participates in Zn(2+) binding. Glu-633 provides a ligand contact to substrate. Catalysis depends on His-652, which acts as the Proton acceptor. Zn(2+) is bound at residue Asp-707. Asp-708–Gln-711 contacts substrate.

This sequence belongs to the metallo-dependent hydrolases superfamily. Adenosine and AMP deaminases family. Homotetramer. Zn(2+) is required as a cofactor.

It catalyses the reaction AMP + H2O + H(+) = IMP + NH4(+). The protein operates within purine metabolism; IMP biosynthesis via salvage pathway; IMP from AMP: step 1/1. Its function is as follows. AMP deaminase plays a critical role in energy metabolism. This Saccharomyces cerevisiae (strain ATCC 204508 / S288c) (Baker's yeast) protein is AMP deaminase (AMD1).